A 439-amino-acid chain; its full sequence is MVQSLQTFSVRDIASGGWFKQHEYIEKLNMQAILNASAGQEEMIKDLLVTHGKIPTLIHELISVEIWKLKVFHVLCQLQDFQPKSTFPLYMVIHHEATIINLLETIFFHKEVCESAEDLTLDLIDYCYRKLTLLASQSSDRRTLSQNRLLPHTANEASSLEELKQQAEALEFDIALKCLSVTRYISDHIDSLPLSVMNRLLNTHNLPCLLVELLHQSPWTQSEKGQLQKYESGRWYPVPAEDQLKMTKLDGQAWIALYNLLLRPECQQKYNINSFTKGQLLKLRSFLTEVLLDQLPNLVDLQRFLSHLSVSEPTPPKKELILEQVPEVWDSIINENSGKWKAIAKYQVKQAFSPSEEDLRSQAKRWAQTYNMDVMEALVPEKPKCGSCGSEASKRCSRCQSEWYCKRECQVKHWQKHKKACDMVSEAMKNMQEEIQKEA.

Zn(2+) is bound by residues C385, C388, C396, C399, C405, C409, H417, and C421. The segment at 385-421 adopts an MYND-type zinc-finger fold; the sequence is CGSCGSEASKRCSRCQSEWYCKRECQVKHWQKHKKAC.

The protein belongs to the ZMYND10 family. Interacts with LRRC6.

It is found in the cytoplasm. It localises to the cytoskeleton. The protein resides in the cilium basal body. Its subcellular location is the microtubule organizing center. The protein localises to the centrosome. It is found in the centriolar satellite. It localises to the apical cell membrane. The protein resides in the dynein axonemal particle. Functionally, plays a role in axonemal structure organization and motility. Involved in axonemal pre-assembly of inner and outer dynein arms (IDA and ODA, respectively) for proper axoneme building for cilia motility. May act by indirectly regulating transcription of dynein proteins. This Xenopus laevis (African clawed frog) protein is Zinc finger MYND domain-containing protein 10 (zmynd10).